A 302-amino-acid chain; its full sequence is Aspartate carbamoyltransferase catalytic subunit (302 aa).

Residues Arg49 and Thr50 each contribute to the carbamoyl phosphate site. L-aspartate is bound at residue Lys77. Carbamoyl phosphate-binding residues include Arg99, His126, and Gln129. L-aspartate-binding residues include Arg159 and Arg209. Carbamoyl phosphate is bound by residues Ala250 and Pro251.

This sequence belongs to the aspartate/ornithine carbamoyltransferase superfamily. ATCase family. As to quaternary structure, heterododecamer (2C3:3R2) of six catalytic PyrB chains organized as two trimers (C3), and six regulatory PyrI chains organized as three dimers (R2).

It catalyses the reaction carbamoyl phosphate + L-aspartate = N-carbamoyl-L-aspartate + phosphate + H(+). It functions in the pathway pyrimidine metabolism; UMP biosynthesis via de novo pathway; (S)-dihydroorotate from bicarbonate: step 2/3. Catalyzes the condensation of carbamoyl phosphate and aspartate to form carbamoyl aspartate and inorganic phosphate, the committed step in the de novo pyrimidine nucleotide biosynthesis pathway. The protein is Aspartate carbamoyltransferase catalytic subunit of Staphylococcus carnosus (strain TM300).